Here is a 127-residue protein sequence, read N- to C-terminus: Large ribosomal subunit protein eL22x (127 aa).

It belongs to the eukaryotic ribosomal protein eL22 family.

The chain is Large ribosomal subunit protein eL22x (RPL22A) from Arabidopsis thaliana (Mouse-ear cress).